The sequence spans 509 residues: Transmembrane protein 180 (509 aa).

Over 1–10 the chain is Extracellular; it reads MGLRLLACLF. Residues 11-42 form a helical membrane-spanning segment; it reads HLPTAVIYGSLSLFVSILHNVFLLYYVDTFVS. The Cytoplasmic segment spans residues 43-54; sequence VYKIDKLSFWIG. The helical transmembrane segment at 55 to 73 threads the bilayer; it reads ETVFLIWNSLNDPLFGWLS. Residues 74–98 are Extracellular-facing; it reads DRVFLSTQQPGAEISSPEVVLKRLR. Residues 99–116 traverse the membrane as a helical segment; that stretch reads ALSHNGPLFAISFLAFWV. Topologically, residues 117–124 are cytoplasmic; the sequence is AWAHPGLQ. Residues 125 to 149 form a helical membrane-spanning segment; sequence FLLCLCMYDSFLTMVDLHHNALLAD. Residues 150–153 are Extracellular-facing; it reads LAVS. Residues 154–177 traverse the membrane as a helical segment; that stretch reads AKDRTSLNFYCSFFSAIGSLSVFM. Residues 178–189 are Cytoplasmic-facing; sequence SYAVWNKEDFFS. Residues 190–221 traverse the membrane as a helical segment; sequence FRIFCIVLAFCSIVGFTLSTQLLRQRFETDGK. The Extracellular segment spans residues 222 to 259; that stretch reads AKWDQESTLKELYIEKLSVPQEKRITLVEYLQQLSRHR. Residues 260 to 287 form a helical membrane-spanning segment; sequence NFLWFVCMNLIQVFHCHFNSNFFPLFLE. Topologically, residues 288–300 are cytoplasmic; sequence HLLSDKISVSTGS. The chain crosses the membrane as a helical span at residues 301-320; it reads FLLGISYIAPHLNNLYFLSL. Topologically, residues 321–325 are extracellular; the sequence is CRRWG. The helical transmembrane segment at 326–345 threads the bilayer; that stretch reads VYAVVRGLFFLKLALSVVML. Topologically, residues 346–353 are cytoplasmic; sequence LAGPDQVY. The chain crosses the membrane as a helical span at residues 354 to 388; it reads LLCIFIASNRVFTEGTCKLLNLVVTDLVDEDLVLN. Topologically, residues 389–397 are extracellular; it reads RRKQAASAL. A helical membrane pass occupies residues 398–424; the sequence is LFGMVALVTKPGQTFAPLIGTWLLCVY. The Cytoplasmic portion of the chain corresponds to 425-458; it reads TGYDIFQRNPLSNVVSAQPKLESDTILEPTLRQG. Residues 459-477 form a helical membrane-spanning segment; it reads CFYLLVFVPITCALLQLLS. Residues 478 to 509 lie on the Extracellular side of the membrane; the sequence is WTQFSLHGKRLQMVKAQRQGLMQGRAPEIKMI.

It is found in the cell membrane. The protein is Transmembrane protein 180 of Gallus gallus (Chicken).